The following is a 63-amino-acid chain: Large ribosomal subunit protein uL29 (63 aa).

This sequence belongs to the universal ribosomal protein uL29 family.

The sequence is that of Large ribosomal subunit protein uL29 (rpmC) from Buchnera aphidicola subsp. Acyrthosiphon kondoi (Acyrthosiphon kondoi symbiotic bacterium).